A 538-amino-acid chain; its full sequence is uncharacterized protein (538 aa).

A signal peptide spans 1–17; the sequence is MNLQILLLLLLFCHVAA. Asparagine 115 carries N-linked (GlcNAc...) asparagine glycosylation.

This is an uncharacterized protein from Caenorhabditis elegans.